The chain runs to 311 residues: Aspartate carbamoyltransferase catalytic subunit (311 aa).

Carbamoyl phosphate-binding residues include Arg-58 and Thr-59. Lys-86 lines the L-aspartate pocket. 3 residues coordinate carbamoyl phosphate: Arg-108, His-136, and Gln-139. Positions 169 and 224 each coordinate L-aspartate. Gly-265 and Pro-266 together coordinate carbamoyl phosphate.

Belongs to the aspartate/ornithine carbamoyltransferase superfamily. ATCase family. As to quaternary structure, heterododecamer (2C3:3R2) of six catalytic PyrB chains organized as two trimers (C3), and six regulatory PyrI chains organized as three dimers (R2).

It catalyses the reaction carbamoyl phosphate + L-aspartate = N-carbamoyl-L-aspartate + phosphate + H(+). It functions in the pathway pyrimidine metabolism; UMP biosynthesis via de novo pathway; (S)-dihydroorotate from bicarbonate: step 2/3. Its function is as follows. Catalyzes the condensation of carbamoyl phosphate and aspartate to form carbamoyl aspartate and inorganic phosphate, the committed step in the de novo pyrimidine nucleotide biosynthesis pathway. The sequence is that of Aspartate carbamoyltransferase catalytic subunit from Geotalea daltonii (strain DSM 22248 / JCM 15807 / FRC-32) (Geobacter daltonii).